Consider the following 226-residue polypeptide: 2-C-methyl-D-erythritol 4-phosphate cytidylyltransferase (226 aa).

It belongs to the IspD/TarI cytidylyltransferase family. IspD subfamily.

The enzyme catalyses 2-C-methyl-D-erythritol 4-phosphate + CTP + H(+) = 4-CDP-2-C-methyl-D-erythritol + diphosphate. It participates in isoprenoid biosynthesis; isopentenyl diphosphate biosynthesis via DXP pathway; isopentenyl diphosphate from 1-deoxy-D-xylulose 5-phosphate: step 2/6. Functionally, catalyzes the formation of 4-diphosphocytidyl-2-C-methyl-D-erythritol from CTP and 2-C-methyl-D-erythritol 4-phosphate (MEP). In Bacillus cereus (strain ATCC 14579 / DSM 31 / CCUG 7414 / JCM 2152 / NBRC 15305 / NCIMB 9373 / NCTC 2599 / NRRL B-3711), this protein is 2-C-methyl-D-erythritol 4-phosphate cytidylyltransferase.